The following is a 512-amino-acid chain: Ribose import ATP-binding protein RbsA 1 (512 aa).

ABC transporter domains lie at 8 to 244 and 257 to 502; these read FRME…IGRE and PEEK…LNIG. 40–47 is a binding site for ATP; the sequence is GENGAGKS.

Belongs to the ABC transporter superfamily. Ribose importer (TC 3.A.1.2.1) family. The complex is composed of an ATP-binding protein (RbsA), two transmembrane proteins (RbsC) and a solute-binding protein (RbsB).

It is found in the cell inner membrane. It catalyses the reaction D-ribose(out) + ATP + H2O = D-ribose(in) + ADP + phosphate + H(+). Functionally, part of the ABC transporter complex RbsABC involved in ribose import. Responsible for energy coupling to the transport system. The chain is Ribose import ATP-binding protein RbsA 1 from Rhizobium etli (strain ATCC 51251 / DSM 11541 / JCM 21823 / NBRC 15573 / CFN 42).